Consider the following 595-residue polypeptide: MEFELEDITIEQSSFTNNNSNNNNNNNNNSNSNNNNNNNNNNINNNNNHNNNNKNNSNNKNEINNQLDIPISNLVVDKENISKKYFCTICSDLLVNSFHADKFKAVQCKNGHYTTCLNCWEKHLEKKKNCIQCGVDVESIESLSSNLLVTQKFTTFKIHCPNSFFDTIDFIKDEVNGCKEIIQINELEEHLKECQYGFISCKNCEEFSKLPFQEFTQCPDFRKNTKEQHDLICPYVKISCEYCGDIINKINKESHNANWCQEITIKCLDCHLPFKKKEINQHQKSFCPETIIQCRYSKGGCNAMIRRSKLSQHLTEGDNHHQFISNILNQQDLKINELELKNTEFCLLLNGQNKKITELEILFKELNDSILIQKQQQKQQQQQQQQQQQQQQQQQQQQQSQQQQSQQQQQSQQQQQSQQSQQNNNSNSHFINNNNNNINNVQMSDSPNGGSLPQAVYKNKWVISNYSEQEQQGISKDYIKSPLFKIGNSTFFLKWFPFGKKKLNYCSIFLYKTQDDKSIIVNYYIHLVNNQISDEVYEKRGCQKYDSENGSAGYGSSQFIKRADLLNDANGFLINDSITIEIEIFATEEILPLQS.

The segment at 14–64 (SFTNNNSNNNNNNNNNSNSNNNNNNNNNNINNNNNHNNNNKNNSNNKNEIN) is disordered. Over residues 17-64 (NNNSNNNNNNNNNSNSNNNNNNNNNNINNNNNHNNNNKNNSNNKNEIN) the composition is skewed to low complexity. The RING-type; degenerate zinc-finger motif lies at 87-134 (CTICSDLLVNSFHADKFKAVQCKNGHYTTCLNCWEKHLEKKKNCIQCG). 2 consecutive TRAF-type zinc fingers follow at residues 189 to 253 (EHLK…INKE) and 254 to 311 (SHNA…SKLS). The stretch at 348–410 (LLNGQNKKIT…QQQQSQQQQQ (63 aa)) forms a coiled coil. Over residues 409–440 (QQSQQQQQSQQSQQNNNSNSHFINNNNNNINN) the composition is skewed to low complexity. The interval 409–450 (QQSQQQQQSQQSQQNNNSNSHFINNNNNNINNVQMSDSPNGG) is disordered. Polar residues predominate over residues 441-450 (VQMSDSPNGG). Residues 456–584 (VYKNKWVISN…NDSITIEIEI (129 aa)) form the MATH domain.

The protein belongs to the TNF receptor-associated factor family. A subfamily.

The protein localises to the cytoplasm. Functionally, probable adapter protein and signal transducer that links members of the tumor necrosis factor receptor family to different signaling pathways by association with the receptor cytoplasmic domain and kinases. This chain is TNF receptor-associated factor family protein DDB_G0272348, found in Dictyostelium discoideum (Social amoeba).